The following is a 1902-amino-acid chain: Plexin-B3 (1902 aa).

The N-terminal stretch at 1–36 (MLTDFLQAPVMAPWSPFSLHLLLLFLPLLPLTRVHR) is a signal peptide. A Sema domain is found at 37 to 461 (FSVPNTSFNH…TAQQVDRILV (425 aa)). Over 37-1245 (FSVPNTSFNH…MMSTFPVEAQ (1209 aa)) the chain is Extracellular. N-linked (GlcNAc...) asparagine glycosylation occurs at Asn-41. 2 cysteine pairs are disulfide-bonded: Cys-88-Cys-97 and Cys-122-Cys-130. Asn-221 carries an N-linked (GlcNAc...) asparagine glycan. Cystine bridges form between Cys-257–Cys-360, Cys-273–Cys-305, and Cys-323–Cys-347. The segment at 353–372 (DSPESYPCGDEHTPSPIAGR) is disordered. 2 N-linked (GlcNAc...) asparagine glycosylation sites follow: Asn-416 and Asn-469. In terms of domain architecture, PSI 1 spans 463 to 515 (ACPQFPNCTTCLQARDPLCGWCILQGRCTRRGECGRAAQPNHWLWSYEDNHCP). 5 disulfide bridges follow: Cys-464–Cys-481, Cys-470–Cys-514, Cys-473–Cys-490, Cys-484–Cys-496, and Cys-551–Cys-569. PSI domains are found at residues 609–671 (DCSA…EACP) and 776–822 (DCAM…QLCP). N-linked (GlcNAc...) asparagine glycosylation is found at Asn-791, Asn-889, Asn-910, Asn-946, Asn-1090, and Asn-1207. 4 IPT/TIG domains span residues 823 to 914 (IPSI…FTYQ), 915 to 1001 (DPVL…FRYT), 1003 to 1134 (NPQL…FLYQ), and 1154 to 1221 (KPGH…QMGN). A helical transmembrane segment spans residues 1246-1266 (LGLGMGAAVLIAAVLLLTLMY). The Cytoplasmic segment spans residues 1267–1902 (RHKSKKALRD…ALVEYKVTDL (636 aa)).

The protein belongs to the plexin family. Binds MET and MST1R. Interacts with RIT2/RIN. May form homodimers (via Sema domain). Interacts (via cytoplasmic domain) with FSCN1, ARHGDIA and RAC1. In terms of tissue distribution, expressed in brain (at protein level). In cerebellum, strongest expression detected in Purkinje and granular cells. Detected at very low levels in several fetal tissues, including dorsal root ganglia (DRG), heart, lung, optic bulb, brain and liver.

The protein resides in the cell membrane. In terms of biological role, receptor for SEMA5A that plays a role in axon guidance, invasive growth and cell migration. Stimulates neurite outgrowth and mediates Ca(2+)/Mg(2+)-dependent cell aggregation. In glioma cells, SEMA5A stimulation of PLXNB3 results in the disassembly of F-actin stress fibers, disruption of focal adhesions and cellular collapse as well as inhibition of cell migration and invasion through ARHGDIA-mediated inactivation of RAC1. Seem to be non-essential for normal development and function of the central nervous system. This Mus musculus (Mouse) protein is Plexin-B3 (Plxnb3).